The chain runs to 525 residues: MWGLQPPTSIPPPPPPTELTPSTYPAMVNGYPPPAASAQSCSSSGGQSELYMPLQRVMAPTGGRNSIKYRDYTPCRNTTKLFYVDNKASDIDTYNKDANHSNFRTTVIHNQDLDADTAATESIQLDNRSCWGGDLKTAVRTNCPNVSSFFQSNSVRVRMMWKRDPPTSTAPPSAVGSGYSVPGAQYKWYDLTVPEGNYALCELIDLLNEGIVQLYLSEGRQNNVQKSDIGVKFDTRNFGLLRDPVTGLVTPGTYVYKGYHPDIVLLPGCAIDFTYSRLSLLLGIGKREPYSKGFVITYEDLQGGDIPALLDLDSVDVNDADGEVIELDNAAPLLHDSAGVSYNVIYDQVTGKPVTAYRSWMLAYNVPNSQANQTTLLTVPDMAGGIGAMYTSLPDTFIAPTGFKEDNTTNLCPVVGMNLFPTYNKIYYQAASTYVQRLENSCQSATAAFNRFPENEILKQAPPMNVSSVCDNQPAVVQQGVLPVKSSLPGLQRVLITDDQRRPIPYVYKSIATVQPTVLSSATLQ.

The interval 1–47 (MWGLQPPTSIPPPPPPTELTPSTYPAMVNGYPPPAASAQSCSSSGGQ) is disordered. Residues 8 to 18 (TSIPPPPPPTE) are compositionally biased toward pro residues. Residues 36–47 (ASAQSCSSSGGQ) are compositionally biased toward low complexity.

Belongs to the adenoviridae penton family. Interacts with the fiber protein (via N-terminal tail region). Interacts with the capsid vertex protein; this interaction binds the penton base to neighboring peripentonal hexons.

It is found in the virion. Its subcellular location is the host nucleus. Functionally, major capsid protein that self-associates to form penton base pentamers, each in the shape of a pentagon, situated at the 12 vertices of the pseudo T=25 capsid. Involved in virus secondary attachment to host cell after initial attachment by the fiber protein, and in endocytosis of virions. As the virus enters the host cell, penton proteins are shed concomitant with virion acidification in the endosome. The chain is Penton protein from Galliformes (FAdV-10).